Here is a 117-residue protein sequence, read N- to C-terminus: Cuticular protein 47Eg (117 aa).

An N-terminal signal peptide occupies residues 1-16 (MKFFIAFACLLAVALA). Residues 31 to 97 (VDGFAYAVEL…SANPPLPTPP (67 aa)) enclose the Chitin-binding type R&amp;R domain.

Functionally, component of the larval cuticle. This Drosophila melanogaster (Fruit fly) protein is Cuticular protein 47Eg (Cpr47Eg).